A 92-amino-acid polypeptide reads, in one-letter code: Small ribosomal subunit protein uS19 (92 aa).

This sequence belongs to the universal ribosomal protein uS19 family.

Protein S19 forms a complex with S13 that binds strongly to the 16S ribosomal RNA. This Macrococcus caseolyticus (strain JCSC5402) (Macrococcoides caseolyticum) protein is Small ribosomal subunit protein uS19.